A 289-amino-acid polypeptide reads, in one-letter code: Elongation factor Ts (289 aa).

The involved in Mg(2+) ion dislocation from EF-Tu stretch occupies residues 82 to 85; sequence TDFL.

The protein belongs to the EF-Ts family.

It localises to the cytoplasm. In terms of biological role, associates with the EF-Tu.GDP complex and induces the exchange of GDP to GTP. It remains bound to the aminoacyl-tRNA.EF-Tu.GTP complex up to the GTP hydrolysis stage on the ribosome. This Pseudomonas aeruginosa (strain LESB58) protein is Elongation factor Ts.